Here is a 216-residue protein sequence, read N- to C-terminus: Fibroblast growth factor 19 (216 aa).

Positions 1–24 are cleaved as a signal peptide; that stretch reads MRSGCVVVHVWILAGLWLAVAGRP. Intrachain disulfides connect Cys-58/Cys-70 and Cys-102/Cys-120.

Belongs to the heparin-binding growth factors family. As to quaternary structure, interacts with FGFR1, FGFR2, FGFR3 and FGFR4. Affinity between fibroblast growth factors (FGFs) and their receptors is increased by KL, KLB and heparan sulfate glycosaminoglycans that function as coreceptors. Interacts with KL; this interaction is direct. Interacts with KLB; this interaction is direct. Interacts with FGFR4 in the presence of heparin, KL or KLB. Interacts with MALRD1. Expressed in fetal brain, cartilage, retina, and adult gall bladder.

It is found in the secreted. Involved in the suppression of bile acid biosynthesis through down-regulation of CYP7A1 expression, following positive regulation of the JNK and ERK1/2 cascades. Stimulates glucose uptake in adipocytes. Activity requires the presence of KLB and FGFR4. The polypeptide is Fibroblast growth factor 19 (FGF19) (Homo sapiens (Human)).